An 85-amino-acid polypeptide reads, in one-letter code: Putative transmembrane protein ORF28 (85 aa).

A run of 2 helical transmembrane segments spans residues 32-52 (IMLLWWIGILGMLNYNLVQIV) and 59-79 (LLSVSTFIVGCGLCIGFMLGI).

The protein localises to the host membrane. The chain is Putative transmembrane protein ORF28 from Haloarcula hispanica (His1V).